A 287-amino-acid chain; its full sequence is UPF0761 membrane protein MS0032 (287 aa).

6 helical membrane-spanning segments follow: residues 37–57 (MLAIVPLVMVVFAIFSAFPMF), 93–113 (SMSAVGIISLIAVALLLINQI), 128–148 (FIFSMTIYWTLLTLGPIFIGM), 174–194 (LLSFVPFLLTWLSFSLIYTLV), 204–224 (AAVGALVAAIFFTLGKKAFAW), and 238–258 (AMATLPITLLWIQLSWLFILL).

Belongs to the UPF0761 family.

It localises to the cell inner membrane. This is UPF0761 membrane protein MS0032 from Mannheimia succiniciproducens (strain KCTC 0769BP / MBEL55E).